Consider the following 187-residue polypeptide: Ribosome-recycling factor (187 aa).

The protein belongs to the RRF family.

The protein localises to the cytoplasm. Responsible for the release of ribosomes from messenger RNA at the termination of protein biosynthesis. May increase the efficiency of translation by recycling ribosomes from one round of translation to another. The chain is Ribosome-recycling factor from Rhodopseudomonas palustris (strain HaA2).